Consider the following 199-residue polypeptide: MKKIALFGGSFDPPHYGHFALCTLTRELFSPEKIILSISKNPLKGSANAPEAHQLAMAKLMAEELGKTGPVFEVSDWELRRAGFSYTIETLRHFHAIEPNAELLLCIGEDNYQIFEKWKAYQEILQLAHLVVFARSGTQGEQQSSRIIPPERYTWVQLDLPLSSSDLRREIAEGQDWQAKMPSSIAAHIAAHRLYQNEK.

Belongs to the NadD family.

It catalyses the reaction nicotinate beta-D-ribonucleotide + ATP + H(+) = deamido-NAD(+) + diphosphate. It functions in the pathway cofactor biosynthesis; NAD(+) biosynthesis; deamido-NAD(+) from nicotinate D-ribonucleotide: step 1/1. Functionally, catalyzes the reversible adenylation of nicotinate mononucleotide (NaMN) to nicotinic acid adenine dinucleotide (NaAD). The polypeptide is Probable nicotinate-nucleotide adenylyltransferase (Chloroherpeton thalassium (strain ATCC 35110 / GB-78)).